Reading from the N-terminus, the 188-residue chain is PRA1 family protein 3 (188 aa).

At M1 the chain carries N-acetylmethionine. Over 1 to 35 the chain is Cytoplasmic; that stretch reads MDVNIAPLRAWDDFFPGSDRFARPDFRDISKWNNR. 2 consecutive transmembrane segments (helical) span residues 36–56 and 57–77; these read VVSN…MMIS and IVGF…VLVF. Topologically, residues 78–93 are cytoplasmic; sequence TGFVWAAHNKDVLRRM. Transmembrane regions (helical) follow at residues 94-114 and 115-135; these read KKRY…FLIS and MFGG…LMFI. Residues 103 to 117 form a required for homodimer formation and heterodimer formation with ARL6IP1 region; that stretch reads MVVMLASYFLISMFG. Topologically, residues 136–188 are cytoplasmic; that stretch reads HASLRLRNLKNKLENKMEGIGLKRTPMGIVLDALEQQEEGINRLTDYISKVKE. The targeting to endoplasmic reticulum membrane stretch occupies residues 136–188; it reads HASLRLRNLKNKLENKMEGIGLKRTPMGIVLDALEQQEEGINRLTDYISKVKE.

Belongs to the PRA1 family. In terms of assembly, homodimer. Heterodimer with ARL6IP1. Forms multimers. Interacts with ARL6. Interacts with prenylated RAB1A and RAB3A. Interacts with SLC1A1/EAAC1. Interacts with RTN2 (via first transmembrane domain). Does not interact with VAMP1, VAMP2 or VAMP3.

Its subcellular location is the endoplasmic reticulum membrane. It localises to the cell membrane. It is found in the cytoplasm. The protein resides in the cytoskeleton. Its function is as follows. Regulates intracellular concentrations of taurine and glutamate. Negatively modulates SLC1A1/EAAC1 glutamate transport activity by decreasing its affinity for glutamate in a PKC activity-dependent manner. Plays a role in the retention of SLC1A1/EAAC1 in the endoplasmic reticulum. This chain is PRA1 family protein 3 (ARL6IP5), found in Homo sapiens (Human).